The sequence spans 811 residues: Glycerol-3-phosphate acyltransferase (811 aa).

Residues 303-308 (CHRSHM) carry the HXXXXD motif motif.

It belongs to the GPAT/DAPAT family.

It is found in the cell inner membrane. It catalyses the reaction sn-glycerol 3-phosphate + an acyl-CoA = a 1-acyl-sn-glycero-3-phosphate + CoA. It functions in the pathway phospholipid metabolism; CDP-diacylglycerol biosynthesis; CDP-diacylglycerol from sn-glycerol 3-phosphate: step 1/3. The protein is Glycerol-3-phosphate acyltransferase of Glaesserella parasuis serovar 5 (strain SH0165) (Haemophilus parasuis).